The chain runs to 406 residues: Alpha-1-antitrypsin (406 aa).

An N-terminal signal peptide occupies residues 1-24 (MTSSISWGLLLLAGLCCLVPSFLA). Position 33 is a phosphoserine (Ser-33). 3 N-linked (GlcNAc...) asparagine glycosylation sites follow: Asn-59, Asn-96, and Asn-260. An RCL region spans residues 362–381 (GTTVLEAVPMSIPPDVCFKN). Phosphoserine is present on Ser-372.

It belongs to the serpin family. As to quaternary structure, interacts with CELA2A. Interacts with ERGIC3 and LMAN1/ERGIC53. Interacts with PRSS1/Trypsin. In terms of tissue distribution, plasma.

Its subcellular location is the secreted. Functionally, inhibitor of serine proteases. Can inhibit elastase, trypsin, chymotrypsin and plasmin. In Meriones unguiculatus (Mongolian jird), this protein is Alpha-1-antitrypsin.